A 962-amino-acid polypeptide reads, in one-letter code: Probable transport protein MmpL9 (962 aa).

The next 12 membrane-spanning stretches (helical) occupy residues 25 to 45, 201 to 223, 225 to 247, 256 to 276, 302 to 322, 335 to 355, 383 to 403, 768 to 788, 796 to 816, 820 to 840, 867 to 887, and 895 to 915; these read LAAI…SVAV, LITG…SIAT, LLIL…FLGY, FVVN…AIFL, ANVI…LSFA, AIGM…IIAI, WPGP…LALP, YDIL…MLMI, LVIV…SVLI, FVGL…LLAV, AMAG…FTMA, and RVIG…TLVV.

This sequence belongs to the resistance-nodulation-cell division (RND) (TC 2.A.6) family. MmpL subfamily.

It is found in the cell membrane. This is Probable transport protein MmpL9 (mmpL9) from Mycobacterium tuberculosis (strain ATCC 25618 / H37Rv).